Here is a 443-residue protein sequence, read N- to C-terminus: MMTNIWHTAPVSALSGEITICGDKSMSHRALLLAALAEGQTEIRGFLACADCLATRQALRALGVDIQREKEIVTIRGVGFLGLQPPKAPLNMQNSGTSMRLLAGILAAQRFESVLCGDESLEKRPMQRIITPLVQMGAKIVSHSNFTAPLHISGRPLTGIDYALPLPSAQLKSCLILAGLLADGTTRLHTCGISRDHTERMLPLFGGALEIKKEQIIVTGGQKLHGCVLDIVGDLSAAAFFMVAALIAPRAEVVIRNVGINPTRAAIITLLQKMGGRIELHHQRFWGAEPVADIVVYHSKLRGITVAPEWIANAIDELPIFFIAAACAEGTTFVGNLSELRVKESDRLAAMAQNLQTLGVACDVGADFIHIYGRSDRQFLPARVNSFGDHRIAMSLAVAGVRAAGELLIDDGAVAAVSMPQFRDFAAAIGMNVGEKDAKNCHD.

K24, S25, and R29 together coordinate 3-phosphoshikimate. Position 24 (K24) interacts with phosphoenolpyruvate. Phosphoenolpyruvate contacts are provided by G96 and R124. 4 residues coordinate 3-phosphoshikimate: S168, Q170, D316, and K343. Q170 contributes to the phosphoenolpyruvate binding site. D316 (proton acceptor) is an active-site residue. 2 residues coordinate phosphoenolpyruvate: R347 and R391.

This sequence belongs to the EPSP synthase family. As to quaternary structure, monomer.

It localises to the cytoplasm. The catalysed reaction is 3-phosphoshikimate + phosphoenolpyruvate = 5-O-(1-carboxyvinyl)-3-phosphoshikimate + phosphate. Its pathway is metabolic intermediate biosynthesis; chorismate biosynthesis; chorismate from D-erythrose 4-phosphate and phosphoenolpyruvate: step 6/7. In terms of biological role, catalyzes the transfer of the enolpyruvyl moiety of phosphoenolpyruvate (PEP) to the 5-hydroxyl of shikimate-3-phosphate (S3P) to produce enolpyruvyl shikimate-3-phosphate and inorganic phosphate. The sequence is that of 3-phosphoshikimate 1-carboxyvinyltransferase from Dichelobacter nodosus (Bacteroides nodosus).